The sequence spans 181 residues: Ribonuclease HII (181 aa).

The RNase H type-2 domain maps to 1–181 (MICGIDEVGR…SLHRKNFKLI (181 aa)). Residues aspartate 6, glutamate 7, and aspartate 98 each coordinate a divalent metal cation.

Belongs to the RNase HII family. Mn(2+) is required as a cofactor. It depends on Mg(2+) as a cofactor.

Its subcellular location is the cytoplasm. The enzyme catalyses Endonucleolytic cleavage to 5'-phosphomonoester.. In terms of biological role, endonuclease that specifically degrades the RNA of RNA-DNA hybrids. This Borreliella burgdorferi (strain ATCC 35210 / DSM 4680 / CIP 102532 / B31) (Borrelia burgdorferi) protein is Ribonuclease HII (rnhB).